A 377-amino-acid chain; its full sequence is 5-hydroxytryptamine receptor 1D (377 aa).

Positions 1 to 23 (MSPLNQSAEGLPQEASNRSLNAT) are disordered. At 1-38 (MSPLNQSAEGLPQEASNRSLNATETSEAWDPRTLQALK) the chain is on the extracellular side. N-linked (GlcNAc...) asparagine glycans are attached at residues Asn5, Asn17, and Asn21. The chain crosses the membrane as a helical span at residues 39 to 64 (ISLAVVLSVITLATVLSNAFVLTTIL). At 65–75 (LTRKLHTPANY) the chain is on the cytoplasmic side. The helical transmembrane segment at 76–97 (LIGSLATTDLLVSILVMPISIA) threads the bilayer. Over 98–109 (YTITHTWNFGQI) the chain is Extracellular. Residues 110–134 (LCDIWLSSDITCCTASILHLCVIAL) form a helical membrane-spanning segment. Cysteines 111 and 188 form a disulfide. Serotonin is bound by residues Asp118 and Cys122. The DRY motif; important for ligand-induced conformation changes motif lies at 135–137 (DRY). The Cytoplasmic portion of the chain corresponds to 135–154 (DRYWAITDALEYSKRRTAGH). The chain crosses the membrane as a helical span at residues 155-176 (AATMIAIVWAISICISIPPLFW). Over 177-194 (RQAKAQEEMSDCLVNTSQ) the chain is Extracellular. The chain crosses the membrane as a helical span at residues 195 to 218 (ISYTIYSTCGAFYIPSVLLIILYG). Residues 219–300 (RIYRAARNRI…ISAARERKAT (82 aa)) lie on the Cytoplasmic side of the membrane. A helical transmembrane segment spans residues 301–326 (KILGIILGAFIICWLPFFVVSLVLPI). Residue Ser321 coordinates serotonin. At 327–335 (CRDSCWIHP) the chain is on the extracellular side. Residues 336 to 359 (ALFDFFTWLGYLNSLINPIIYTVF) traverse the membrane as a helical segment. The short motif at 352-356 (NPIIY) is the NPxxY motif; important for ligand-induced conformation changes and signaling element. Residues 360–377 (NEEFRQAFQKIVPFRKAS) are Cytoplasmic-facing.

Belongs to the G-protein coupled receptor 1 family. As to quaternary structure, homodimer. Heterodimer with HTR1B. In terms of tissue distribution, detected in brain neocortex and caudate nucleus (at protein level).

It is found in the cell membrane. G-protein coupled receptor for 5-hydroxytryptamine (serotonin). Also functions as a receptor for ergot alkaloid derivatives, various anxiolytic and antidepressant drugs and other psychoactive substances. Ligand binding causes a conformation change that triggers signaling via guanine nucleotide-binding proteins (G proteins) and modulates the activity of downstream effectors, such as adenylate cyclase. HTR1D is coupled to G(i)/G(o) G alpha proteins and mediates inhibitory neurotransmission by inhibiting adenylate cyclase activity. Regulates the release of 5-hydroxytryptamine in the brain, and thereby affects neural activity. May also play a role in regulating the release of other neurotransmitters. May play a role in vasoconstriction. The sequence is that of 5-hydroxytryptamine receptor 1D from Homo sapiens (Human).